The sequence spans 292 residues: ABC transporter ATP-binding protein YtrB (292 aa).

The region spanning Ile2–Thr227 is the ABC transporter domain. Gly34–Thr41 lines the ATP pocket.

This sequence belongs to the ABC transporter superfamily. As to quaternary structure, the complex is composed of 2 ATP-binding proteins (YtrB and YtrE), 2 transmembrane proteins (YtrC and YtrD) and a solute-binding protein (YtrF).

Its subcellular location is the cell membrane. Its function is as follows. Part of the ABC transporter complex YtrBCDEF that plays a role in acetoin utilization during stationary phase and sporulation. This Bacillus subtilis (strain 168) protein is ABC transporter ATP-binding protein YtrB (ytrB).